The chain runs to 436 residues: MSKPLPLVTRQGDRIAIVSGLRTPFAKQATAYHGVPAVDLGKIVVSELLARSGVAPELIDQLVFGQVVQMPEAPNIAREIVLGTGMSVHTDAYSVSRACATSFQAVANVAESIIAGSVTVAIAGGADSSSVLPIGVSKALARTLVDVNKARTLSQRLKLFSRLKLRDLLPVAPAVAEYSTGLRMGDTAEQMAKTYGISRQDQDALALRSHQMAAQAWQQGLLHDEVMTAYIPPFSDAITEDNNIRKDSTMEQYAKLRPAFDRKHGSVTAANSTPLTDGAAAVMMMSESKAKELGLQPLGYLRSFAFSAIDVWQDMLLGPSYATPLALDRAGITLADLTLIDMHEAFAAQTLANLKMFASDSFAREKLGRSQAIGEVDMSKFNVLGGSIAYGHPFAATGARMITQTLNELRRRGGGLGLTTACAAGGLGAAMIVEVE.

Cysteine 99 acts as the Acyl-thioester intermediate in catalysis. Catalysis depends on proton acceptor residues histidine 392 and cysteine 422.

It belongs to the thiolase-like superfamily. Thiolase family. As to quaternary structure, heterotetramer of two alpha chains (FadJ) and two beta chains (FadI).

It localises to the cytoplasm. It carries out the reaction an acyl-CoA + acetyl-CoA = a 3-oxoacyl-CoA + CoA. It functions in the pathway lipid metabolism; fatty acid beta-oxidation. Functionally, catalyzes the final step of fatty acid oxidation in which acetyl-CoA is released and the CoA ester of a fatty acid two carbons shorter is formed. The polypeptide is 3-ketoacyl-CoA thiolase (Yersinia enterocolitica serotype O:8 / biotype 1B (strain NCTC 13174 / 8081)).